The chain runs to 876 residues: Senescence-induced receptor-like serine/threonine-protein kinase (876 aa).

The signal sequence occupies residues 1 to 24; the sequence is MAMLKSLSSILFTSFALLFFLVHA. Over 25–517 the chain is Extracellular; the sequence is QDQSGFISID…SNTKKKNKNG (493 aa). 3 LRR repeats span residues 415–438, 439–462, and 463–483; these read RVVS…SNLT, SIRK…ANLP, and NLTE…QRLH. The helical transmembrane segment at 518–538 threads the bilayer; sequence YIIPLVVVGIIVVLLTALALF. At 539–876 the chain is on the cytoplasmic side; the sequence is RRFKKKQQRG…LDTEMVPRAR (338 aa). The Protein kinase domain maps to 574–847; sequence NNFERVIGKG…VVMELKQIVY (274 aa). ATP-binding positions include 580 to 588 and Lys601; that span reads IGKGGFGKV. Tyr646 carries the phosphotyrosine modification. Asp697 (proton acceptor) is an active-site residue. Ser731 carries the phosphoserine modification. Thr732 bears the Phosphothreonine mark. Tyr745 is subject to Phosphotyrosine.

The protein belongs to the protein kinase superfamily. Ser/Thr protein kinase family.

It is found in the membrane. In terms of biological role, involved in innate immune response of plants. The sequence is that of Senescence-induced receptor-like serine/threonine-protein kinase (SIRK) from Arabidopsis thaliana (Mouse-ear cress).